Consider the following 769-residue polypeptide: Amino-acid acetyltransferase, mitochondrial (769 aa).

The tract at residues 150–172 (LKASPAKSGQEPTESPKESISAS) is disordered. Over residues 159 to 172 (QEPTESPKESISAS) the composition is skewed to polar residues. The 170-residue stretch at 590 to 759 (MQPRLGLNDP…YEAVCRSIQP (170 aa)) folds into the N-acetyltransferase domain.

It belongs to the acetyltransferase family.

Its subcellular location is the mitochondrion. It catalyses the reaction L-glutamate + acetyl-CoA = N-acetyl-L-glutamate + CoA + H(+). Its pathway is amino-acid biosynthesis; L-arginine biosynthesis; N(2)-acetyl-L-ornithine from L-glutamate: step 1/4. In terms of biological role, N-acetylglutamate synthase involved in arginine biosynthesis. The sequence is that of Amino-acid acetyltransferase, mitochondrial (arg2) from Penicillium rubens (strain ATCC 28089 / DSM 1075 / NRRL 1951 / Wisconsin 54-1255) (Penicillium chrysogenum).